A 278-amino-acid polypeptide reads, in one-letter code: 3-methyl-2-oxobutanoate hydroxymethyltransferase (278 aa).

Mg(2+) is bound by residues Asp-43 and Asp-82. 3-methyl-2-oxobutanoate is bound by residues 43 to 44, Asp-82, and Lys-112; that span reads DS. Glu-114 serves as a coordination point for Mg(2+). Glu-181 serves as the catalytic Proton acceptor.

The protein belongs to the PanB family. Homodecamer; pentamer of dimers. Requires Mg(2+) as cofactor.

Its subcellular location is the cytoplasm. The enzyme catalyses 3-methyl-2-oxobutanoate + (6R)-5,10-methylene-5,6,7,8-tetrahydrofolate + H2O = 2-dehydropantoate + (6S)-5,6,7,8-tetrahydrofolate. Its pathway is cofactor biosynthesis; (R)-pantothenate biosynthesis; (R)-pantoate from 3-methyl-2-oxobutanoate: step 1/2. Functionally, catalyzes the reversible reaction in which hydroxymethyl group from 5,10-methylenetetrahydrofolate is transferred onto alpha-ketoisovalerate to form ketopantoate. The sequence is that of 3-methyl-2-oxobutanoate hydroxymethyltransferase from Bacillus cereus (strain ATCC 10987 / NRS 248).